We begin with the raw amino-acid sequence, 384 residues long: S-adenosylmethionine synthase (384 aa).

His15 serves as a coordination point for ATP. Asp17 is a Mg(2+) binding site. K(+) is bound at residue Glu43. Residues Glu56 and Gln99 each contribute to the L-methionine site. The segment at 99-109 (QSSDINQGVDR) is flexible loop. ATP-binding positions include 164–166 (DAK), 230–231 (RF), Asp239, 245–246 (RK), Ala262, and Lys266. Residue Asp239 participates in L-methionine binding. L-methionine is bound at residue Lys270.

This sequence belongs to the AdoMet synthase family. Homotetramer; dimer of dimers. The cofactor is Mg(2+). K(+) serves as cofactor.

The protein localises to the cytoplasm. It carries out the reaction L-methionine + ATP + H2O = S-adenosyl-L-methionine + phosphate + diphosphate. The protein operates within amino-acid biosynthesis; S-adenosyl-L-methionine biosynthesis; S-adenosyl-L-methionine from L-methionine: step 1/1. Functionally, catalyzes the formation of S-adenosylmethionine (AdoMet) from methionine and ATP. The overall synthetic reaction is composed of two sequential steps, AdoMet formation and the subsequent tripolyphosphate hydrolysis which occurs prior to release of AdoMet from the enzyme. The polypeptide is S-adenosylmethionine synthase (Histophilus somni (strain 129Pt) (Haemophilus somnus)).